The sequence spans 379 residues: SUN domain-containing protein 5 (379 aa).

The segment at 1 to 45 (MPRSSRSPGDPGALLEDVAHNPRPRRIAQRGRNTSRMAEDTSPNM) is disordered. At 1-105 (MPRSSRSPGD…LLCQKLMEKT (105 aa)) the chain is on the nuclear side. Over residues 31 to 45 (GRNTSRMAEDTSPNM) the composition is skewed to polar residues. The chain crosses the membrane as a helical span at residues 106–122 (GILLLCAFGFWMFSIHL). Over 123–379 (PSKMKVWQDD…PHQNPYPKRD (257 aa)) the chain is Perinuclear space. Positions 141 to 182 (LRLYQEKVRHHSGEIQDLRGSMNQLIAKLQEMEAMSDEQKMA) form a coiled coil. The SUN domain occupies 205-364 (GASIDFEHTS…YRVRVHGSVA (160 aa)).

Probable homotrimer. Interacts with DNAJB13. Post-translationally, highly glycosylated in the Golgi apparatus during spermiogenesis. Sperm (at protein level). Widely expressed. Conflictingly shown to be specifically expressed in testis.

The protein resides in the nucleus inner membrane. The protein localises to the golgi apparatus. Plays an essential role in anchoring sperm head to the tail. Is responsible for the attachment of the coupling apparatus to the sperm nuclear envelope. This Homo sapiens (Human) protein is SUN domain-containing protein 5 (SUN5).